Here is a 170-residue protein sequence, read N- to C-terminus: Small ribosomal subunit protein bS18c (170 aa).

The interval 1 to 61 (MYTSKQPFLK…RRPRIGPGDR (61 aa)) is disordered. Positions 13-26 (QPFSKSKQTFNKSK) are enriched in polar residues. Basic residues predominate over residues 27 to 55 (QPFRKSKQTFRKFKQPFRKSKQPFRRRPR).

It belongs to the bacterial ribosomal protein bS18 family. In terms of assembly, part of the 30S ribosomal subunit.

Its subcellular location is the plastid. The protein localises to the chloroplast. The chain is Small ribosomal subunit protein bS18c from Hordeum vulgare (Barley).